A 145-amino-acid chain; its full sequence is uncharacterized protein (145 aa).

This is an uncharacterized protein from Saccharomyces cerevisiae (strain ATCC 204508 / S288c) (Baker's yeast).